Reading from the N-terminus, the 322-residue chain is Nucleoprotein (322 aa).

6 residues coordinate RNA: tyrosine 43, tyrosine 46, valine 76, arginine 122, lysine 240, and serine 269.

It belongs to the tenuiviruses nucleocapsid protein family.

It is found in the virion. The protein localises to the host cytoplasm. Functionally, encapsidates the genome, protecting it from nucleases. The encapsidated genomic RNA is termed the nucleocapsid (NC), and serves as template for viral transcription and replication. The polypeptide is Nucleoprotein (Avena sativa (Oat)).